The following is a 544-amino-acid chain: Probable protein kinase UbiB (544 aa).

The Protein kinase domain occupies 123 to 504; sequence DFDENALASA…QRWQKKMFVL (382 aa). ATP contacts are provided by residues 129–137 and Lys-155; that span reads LASASIAQV. Residue Asp-290 is the Proton acceptor of the active site. 2 helical membrane passes run 501–521 and 523–543; these read MFVL…FAAL and LAIS…GFLL.

This sequence belongs to the ABC1 family. UbiB subfamily.

The protein localises to the cell inner membrane. It functions in the pathway cofactor biosynthesis; ubiquinone biosynthesis [regulation]. Its function is as follows. Is probably a protein kinase regulator of UbiI activity which is involved in aerobic coenzyme Q (ubiquinone) biosynthesis. This Histophilus somni (strain 129Pt) (Haemophilus somnus) protein is Probable protein kinase UbiB.